We begin with the raw amino-acid sequence, 521 residues long: Cytochrome P450 monooxygenase ARMGADRAFT_1018420 (521 aa).

A helical transmembrane segment spans residues 9 to 26 (VSPIWILTAIVVVAYTTV). Cysteine 443 contributes to the heme binding site. N-linked (GlcNAc...) asparagine glycosylation occurs at asparagine 450.

This sequence belongs to the cytochrome P450 family. The cofactor is heme.

Its subcellular location is the membrane. The protein operates within secondary metabolite biosynthesis. Cytochrome P450 monooxygenase, part of the gene cluster that mediates the biosynthesis of melleolides, a range of antifungal and phytotoxic polyketide derivatives composed of an orsellinic acid (OA) moiety esterified to various sesquiterpene alcohols. The first step in melleolides biosynthesis is performed by the delta(6)-protoilludene synthase PRO1 which catalyzes the cyclization of farnesyl diphosphate to protoilludene. The orsellinic acid synthase armB produces OA by condensing acetyl-CoA with 3 malonyl-CoA units in a three-round chain elongation reaction folowed by a C2-C7 ring closure. ArmB further catalyzes the trans-esterification of OA to the various sesquiterpene alcohols resulting from the hydroxylation of protoilludene. The melleolides cluster also includes 5 cytochrome P450 monooxygenases, 4 NAD(+)-dependent oxidoreductases, one flavin-dependent oxidoreductase, and one O-methyltransferase. The cytochrome P450 monooxygenases may be involved in protoilludene hydroxylation to elaborate melleolides with multiple alcohol groups, such as melleolide D, which carries alcohol functionalities at C-4, C-5, C-10, and C-13. The role of the NAD(+)-dependent enzymes remains unknown. Numerous melleolides, including arnamial, show 5'-O-methylation of the aromatic moiety which may be catalyzed by the methyltransferase encoded in the cluster. The flavin-dependent oxidoreductase might represent the dehydrogenase yielding the aldehyde in position 1 of arnamial and other melleolides. Finally, several halogenase localized outside of the cluster, are able to catalyze the transfer of a single chlorine atom to the melleolide backbone, resulting in a 6'-chloromelleolide product. This is Cytochrome P450 monooxygenase ARMGADRAFT_1018420 from Armillaria gallica (Bulbous honey fungus).